The following is an 82-amino-acid chain: Acyl carrier protein (82 aa).

The region spanning 2–77 is the Carrier domain; it reads DNVADRVKKV…QAIDYVSAHI (76 aa). The residue at position 37 (Ser-37) is an O-(pantetheine 4'-phosphoryl)serine.

The protein belongs to the acyl carrier protein (ACP) family. Post-translationally, 4'-phosphopantetheine is transferred from CoA to a specific serine of apo-ACP by AcpS. This modification is essential for activity because fatty acids are bound in thioester linkage to the sulfhydryl of the prosthetic group.

It is found in the cytoplasm. The protein operates within lipid metabolism; fatty acid biosynthesis. Carrier of the growing fatty acid chain in fatty acid biosynthesis. This chain is Acyl carrier protein, found in Acidithiobacillus ferrooxidans (strain ATCC 23270 / DSM 14882 / CIP 104768 / NCIMB 8455) (Ferrobacillus ferrooxidans (strain ATCC 23270)).